The chain runs to 360 residues: DNA replication and repair protein RecF (360 aa).

30-37 (GNNGSGKT) serves as a coordination point for ATP.

It belongs to the RecF family.

It localises to the cytoplasm. Functionally, the RecF protein is involved in DNA metabolism; it is required for DNA replication and normal SOS inducibility. RecF binds preferentially to single-stranded, linear DNA. It also seems to bind ATP. The polypeptide is DNA replication and repair protein RecF (Mannheimia succiniciproducens (strain KCTC 0769BP / MBEL55E)).